The following is a 356-amino-acid chain: GTPase Obg (356 aa).

An Obg domain is found at 1–158; that stretch reads MFIDSVKITL…RLVRLELKLI (158 aa). One can recognise an OBG-type G domain in the interval 159 to 339; sequence ADVGLVGFPN…LKFMLLEEIK (181 aa). Residues 165–172, 190–194, 212–215, 280–283, and 320–322 each bind GTP; these read GFPNVGKS, FTTLT, DIPG, SKSD, and SSL. Positions 172 and 192 each coordinate Mg(2+).

This sequence belongs to the TRAFAC class OBG-HflX-like GTPase superfamily. OBG GTPase family. Monomer. It depends on Mg(2+) as a cofactor.

It is found in the cytoplasm. Its function is as follows. An essential GTPase which binds GTP, GDP and possibly (p)ppGpp with moderate affinity, with high nucleotide exchange rates and a fairly low GTP hydrolysis rate. Plays a role in control of the cell cycle, stress response, ribosome biogenesis and in those bacteria that undergo differentiation, in morphogenesis control. In Campylobacter jejuni subsp. jejuni serotype O:23/36 (strain 81-176), this protein is GTPase Obg.